Reading from the N-terminus, the 593-residue chain is UvrABC system protein C (593 aa).

The 78-residue stretch at 17 to 94 (MEPGCYLMKD…IKQYQPRYNI (78 aa)) folds into the GIY-YIG domain. The UVR domain occupies 199–234 (KTILKSLEERMLTASESLDFERAKEYRDLIQHIQNL).

It belongs to the UvrC family. As to quaternary structure, interacts with UvrB in an incision complex.

The protein localises to the cytoplasm. Functionally, the UvrABC repair system catalyzes the recognition and processing of DNA lesions. UvrC both incises the 5' and 3' sides of the lesion. The N-terminal half is responsible for the 3' incision and the C-terminal half is responsible for the 5' incision. In Staphylococcus aureus (strain bovine RF122 / ET3-1), this protein is UvrABC system protein C.